A 208-amino-acid chain; its full sequence is Putative 3-methyladenine DNA glycosylase (208 aa).

Belongs to the DNA glycosylase MPG family.

The sequence is that of Putative 3-methyladenine DNA glycosylase from Lactobacillus johnsonii (strain CNCM I-12250 / La1 / NCC 533).